A 500-amino-acid chain; its full sequence is Glycerol kinase (500 aa).

Thr-11 contributes to the ADP binding site. Residues Thr-11, Thr-12, and Ser-13 each coordinate ATP. Thr-11 provides a ligand contact to sn-glycerol 3-phosphate. An ADP-binding site is contributed by Arg-15. Sn-glycerol 3-phosphate contacts are provided by Arg-81, Glu-82, Tyr-133, and Asp-242. Residues Arg-81, Glu-82, Tyr-133, Asp-242, and Gln-243 each coordinate glycerol. Residues Thr-264 and Gly-307 each coordinate ADP. 4 residues coordinate ATP: Thr-264, Gly-307, Gln-311, and Gly-411. Gly-411 is an ADP binding site.

This sequence belongs to the FGGY kinase family.

The catalysed reaction is glycerol + ATP = sn-glycerol 3-phosphate + ADP + H(+). It participates in polyol metabolism; glycerol degradation via glycerol kinase pathway; sn-glycerol 3-phosphate from glycerol: step 1/1. Inhibited by fructose 1,6-bisphosphate (FBP). Key enzyme in the regulation of glycerol uptake and metabolism. Catalyzes the phosphorylation of glycerol to yield sn-glycerol 3-phosphate. This chain is Glycerol kinase, found in Rhodopseudomonas palustris (strain BisA53).